We begin with the raw amino-acid sequence, 264 residues long: JmjC domain-containing protein 8 (264 aa).

The signal sequence occupies residues 1–23; sequence MAPASRLLALWALAAVALPGSGA. Asn-130, Asn-140, and Asn-209 each carry an N-linked (GlcNAc...) asparagine glycan. The JmjC domain occupies 131–264; the sequence is DTLYFFGDNN…TSVFISTFLG (134 aa).

Oligomer. Dimer. Interacts with PKM; regulates angiogenesis and metabolism. N-glycosylated.

It is found in the endoplasmic reticulum lumen. The protein resides in the cytoplasm. Functionally, functions as a positive regulator of TNF-induced NF-kappa-B signaling. Regulates angiogenesis and cellular metabolism through interaction with PKM. The polypeptide is JmjC domain-containing protein 8 (Homo sapiens (Human)).